The following is a 405-amino-acid chain: Accessory Sec system protein translocase subunit SecY2 (405 aa).

The next 10 membrane-spanning stretches (helical) occupy residues 14 to 34 (LFTL…LPFV), 63 to 83 (LSIF…WQMF), 104 to 124 (MYLT…RLPV), 131 to 151 (ILVV…LVWL), 156 to 176 (ASMG…LNIP), 191 to 211 (GIIV…ALMY), 247 to 267 (MYVM…GFIF), 285 to 305 (PLWV…FAFV), 343 to 363 (FSVI…LFVL), and 368 to 388 (LLRL…IFTI).

This sequence belongs to the SecY/SEC61-alpha family. SecY2 subfamily. As to quaternary structure, component of the accessory SecA2/SecY2 protein translocase complex required to export cell wall proteins. May form heterotrimers with SecE and SecG subunits.

Its subcellular location is the cell membrane. Part of the accessory SecA2/SecY2 system specifically required for export of possible cell wall proteins. The central subunit of a protein translocation channel. The sequence is that of Accessory Sec system protein translocase subunit SecY2 from Streptococcus pneumoniae (strain CGSP14).